Here is a 122-residue protein sequence, read N- to C-terminus: Small ribosomal subunit protein uS12 (122 aa).

Aspartate 89 carries the 3-methylthioaspartic acid modification.

It belongs to the universal ribosomal protein uS12 family. In terms of assembly, part of the 30S ribosomal subunit. Contacts proteins S8 and S17. May interact with IF1 in the 30S initiation complex.

With S4 and S5 plays an important role in translational accuracy. Its function is as follows. Interacts with and stabilizes bases of the 16S rRNA that are involved in tRNA selection in the A site and with the mRNA backbone. Located at the interface of the 30S and 50S subunits, it traverses the body of the 30S subunit contacting proteins on the other side and probably holding the rRNA structure together. The combined cluster of proteins S8, S12 and S17 appears to hold together the shoulder and platform of the 30S subunit. The sequence is that of Small ribosomal subunit protein uS12 from Corynebacterium glutamicum (strain R).